A 395-amino-acid polypeptide reads, in one-letter code: Methylthioribose-1-phosphate isomerase (395 aa).

Residue Asp-258 is the Proton donor of the active site.

The protein belongs to the eIF-2B alpha/beta/delta subunits family. MtnA subfamily.

The protein resides in the cytoplasm. Its subcellular location is the nucleus. It catalyses the reaction 5-(methylsulfanyl)-alpha-D-ribose 1-phosphate = 5-(methylsulfanyl)-D-ribulose 1-phosphate. Its pathway is amino-acid biosynthesis; L-methionine biosynthesis via salvage pathway; L-methionine from S-methyl-5-thio-alpha-D-ribose 1-phosphate: step 1/6. Catalyzes the interconversion of methylthioribose-1-phosphate (MTR-1-P) into methylthioribulose-1-phosphate (MTRu-1-P). The protein is Methylthioribose-1-phosphate isomerase of Podospora anserina (strain S / ATCC MYA-4624 / DSM 980 / FGSC 10383) (Pleurage anserina).